The chain runs to 207 residues: dTTP/UTP pyrophosphatase (207 aa).

Residue Asp79 is the Proton acceptor of the active site.

Belongs to the Maf family. YhdE subfamily. The cofactor is a divalent metal cation.

It localises to the cytoplasm. It catalyses the reaction dTTP + H2O = dTMP + diphosphate + H(+). The catalysed reaction is UTP + H2O = UMP + diphosphate + H(+). Nucleoside triphosphate pyrophosphatase that hydrolyzes dTTP and UTP. May have a dual role in cell division arrest and in preventing the incorporation of modified nucleotides into cellular nucleic acids. The chain is dTTP/UTP pyrophosphatase from Rhodopseudomonas palustris (strain BisB18).